The sequence spans 140 residues: Pre-mRNA-splicing factor NTC20 (140 aa).

Serine 139 carries the phosphoserine modification.

Belongs to the NTC complex (or PRP19-associated complex), composed of at least CEF1, CLF1, ISY1, NTC20, SNT309, SYF1, SYF2, and PRP19. The NTC complex associates with the spliceosome after the release of the U1 and U4 snRNAs and forms the CWC spliceosome subcomplex (or CEF1-associated complex) reminiscent of a late-stage spliceosome composed also of the U2, U5 and U6 snRNAs and at least BUD13, BRR2, CDC40, CUS1, CWC2, CWC15, CWC21, CWC22, CWC23, CWC24, CWC25, CWC27, ECM2, HSH155, IST3, LEA1, MSL1, PRP8, PRP9, PRP11, PRP21, PRP22, PRP45, PRP46, SLU7, SMB1, SMD1, SMD2, SMD3, SMX2, SMX3, SNU114, SPP2, RSE1 and YJU2. Interacts with CEF1, CLF1, ISY1, PRP46, and SYF1.

The protein localises to the nucleus. In terms of biological role, involved in pre-mRNA splicing. As a component of the NTC complex, associates to the spliceosome to mediate conformational rearrangement or to stabilize the structure of the spliceosome after U4 snRNA dissociation, which leads to spliceosome maturation. The polypeptide is Pre-mRNA-splicing factor NTC20 (NTC20) (Saccharomyces cerevisiae (strain ATCC 204508 / S288c) (Baker's yeast)).